The chain runs to 803 residues: Cation channel sperm-associated auxiliary subunit delta (803 aa).

The signal sequence occupies residues 1-15; it reads MLMLMLAAVATVVRA. Residues 16 to 720 are Extracellular-facing; that stretch reads QTVCRFRTVR…ALPVAEFRPM (705 aa). 7 disulfide bridges follow: Cys-19-Cys-365, Cys-55-Cys-142, Cys-141-Cys-148, Cys-383-Cys-492, Cys-506-Cys-698, Cys-521-Cys-568, and Cys-620-Cys-648. Asn-226, Asn-418, Asn-436, Asn-468, Asn-534, Asn-545, and Asn-626 each carry an N-linked (GlcNAc...) asparagine glycan. The helical transmembrane segment at 721–742 threads the bilayer; sequence TSILLMVTVTLFTMWLAYAIPK. Over 743 to 803 the chain is Cytoplasmic; it reads QLRTERGRRL…QIGKKPDIKK (61 aa). Positions 782–803 are disordered; that stretch reads SRRVKDQPEKIPQIGKKPDIKK.

This sequence belongs to the CATSPERD family. In terms of assembly, component of the CatSper complex or CatSpermasome composed of the core pore-forming members CATSPER1, CATSPER2, CATSPER3 and CATSPER4 as well as auxiliary members CATSPERB, CATSPERG, CATSPERD, CATSPERE, CATSPERZ, C2CD6/CATSPERT, SLCO6C1, TMEM249, TMEM262 and EFCAB9. HSPA1 may be an additional auxiliary complex member. The core complex members CATSPER1, CATSPER2, CATSPER3 and CATSPER4 form a heterotetrameric channel. The auxiliary CATSPERB, CATSPERG, CATSPERD and CATSPERE subunits form a pavilion-like structure over the pore which stabilizes the complex through interactions with CATSPER4, CATSPER3, CATSPER1 and CATSPER2 respectively. SLCO6C1 interacts with CATSPERE and TMEM262/CATSPERH interacts with CATSPERB, further stabilizing the complex. C2CD6/CATSPERT interacts at least with CATSPERD and is required for targeting the CatSper complex in the flagellar membrane.

It is found in the cell projection. Its subcellular location is the cilium. The protein localises to the flagellum membrane. In terms of biological role, auxiliary component of the CatSper complex, a complex involved in sperm cell hyperactivation. Sperm cell hyperactivation is needed for sperm motility which is essential late in the preparation of sperm for fertilization. Required for CATSPER1 stability before intraflagellar transport and/or incorporation of the CatSper complex channel into the flagellar membrane. This Rattus norvegicus (Rat) protein is Cation channel sperm-associated auxiliary subunit delta.